Consider the following 683-residue polypeptide: MSSESSKKRKPKVIRSDGAPAEGKRNRSDTEQEGKYYSEEAEVDLRDPGRDYELYKYTCQELQRLMAEIQDLKSRGGKDVAIEIEERRIQSCVHFMTLKKLNRLAHIRLKKGRDQTHEAKQKVDAYHLQLQNLLYEVMHLQKEITKCLEFKSKHEEIDLVSLEEFYKEAPPDISKAEVTMGDPHQQTLARLDWELEQRKRLAEKYRECLSNKEKILKEIEVKKEYLSSLQPRLNSIMQASLPVQEYLFMPFDQAHKQYETARHLPPPLYVLFVQATAYGQACDKTLSVAIEGSVDEAKALFKPPEDSQDDESDSDAEEEQTTKRRRPTLGVQLDDKRKEMLKRHPLSVMLDLKCKDDSVLHLTFYYLMNLNIMTVKAKVTTAMELITPISAGDLLSPDSVLSCLYPGDHGKKTPNPANQYQFDKVGILTLSDYVLELGHPYLWVQKLGGLHFPKEQPQQTVIADHSLSASHMETTMKLLKTRVQSRLALHKQFASLEHGIVPVTSDCQYLFPAKVVSRLVKWVTVAHEDYMELHFTKDIVDAGLAGDTNLYYMALIERGTAKLQAAVVLNPGYSSIPPVFQLCLNWKGEKTNSNDDNIRAMEGEVNVCYKELCGPWPSHQLLTNQLQRLCVLLDVYLETESHDDSVEGPKEFPQEKMCLRLFRGPSRMKPFKYNHPQGFFSHR.

The disordered stretch occupies residues Met-1–Glu-42. N-acetylserine is present on Ser-2. Residues Ser-2–Ile-144 form an interaction with CSF1R region. Positions Ser-2 to Lys-199 are interaction with THOC7. Ser-5 and Ser-6 each carry phosphoserine. Positions Lys-7 to Lys-10 match the Nuclear localization signal motif. Basic and acidic residues predominate over residues Glu-22–Glu-42. Residues Ala-81–Leu-247 adopt a coiled-coil conformation. A Glycyl lysine isopeptide (Lys-Gly) (interchain with G-Cter in SUMO2) cross-link involves residue Lys-153. Tyr-225 is subject to Phosphotyrosine; by SRC. The tract at residues Leu-247–Arg-683 is tandem RWD domains. Positions Phe-301–Lys-336 are disordered. A compositionally biased stretch (acidic residues) spans Asp-306–Glu-319. Phosphoserine is present on residues Ser-307, Ser-312, and Ser-314. A Phosphothreonine modification is found at Thr-328.

Belongs to the THOC5 family. Component of the THO subcomplex, which is composed of THOC1, THOC2, THOC3, THOC5, THOC6 and THOC7. The THO subcomplex interacts with DDX39B to form the THO-DDX39B complex which multimerizes into a 28-subunit tetrameric assembly. Component of the transcription/export (TREX) complex at least composed of ALYREF/THOC4, DDX39B, SARNP/CIP29, CHTOP and the THO subcomplex; in the complex interacts with THOC1, THOC2, THOC5, THOC6 and THOC7; forms a coiled-coil dimer with THOC7; together with THOC6 and THOC7, plays a key structural role in oligomerization of the THO-DDX39B complex. TREX seems to have a dynamic structure involving ATP-dependent remodeling. Interacts with phosphorylated CSF1R. Interacts (via N-terminus) with the NTF2 domain of NXF1. Forms a complex with CEBPB. Interacts with CPSF6; indicative for an association with the cleavage factor Im (CFIm) complex. Interacts with LUZP4. Interacts with NCBP3. In terms of processing, phosphorylated on tyrosine upon binding to activated CSF1R; which causes a dissociation of the two proteins. Phosphorylation on Ser-5 and/or Ser-6 is required for nuclear export. Phosphorylated on Thr-328 in insulin-stimulated adipocytes. Phosphorylation at Tyr-225 modulates mRNA binding. Ubiquitously expressed.

It localises to the nucleus. Its subcellular location is the cytoplasm. Functionally, component of the THO subcomplex of the TREX complex which is thought to couple mRNA transcription, processing and nuclear export, and which specifically associates with spliced mRNA and not with unspliced pre-mRNA. Plays a key structural role in the oligomerization of the THO-DDX39B complex. TREX is recruited to spliced mRNAs by a transcription-independent mechanism, binds to mRNA upstream of the exon-junction complex (EJC) and is recruited in a splicing- and cap-dependent manner to a region near the 5' end of the mRNA where it functions in mRNA export to the cytoplasm via the TAP/NXF1 pathway. THOC5 in conjunction with ALYREF/THOC4 functions in NXF1-NXT1 mediated nuclear export of HSP70 mRNA; both proteins enhance the RNA binding activity of NXF1 and are required for NXF1 localization to the nuclear rim. Involved in transcription elongation and genome stability. Involved in alternative polyadenylation site choice by recruiting CPSF6 to 5' region of target genes; probably mediates association of the TREX and CFIm complexes. Regulates the expression of myeloid transcription factors CEBPA, CEBPB and GAB2 by enhancing the levels of phosphatidylinositol 3,4,5-trisphosphate. May be involved in the differentiation of granulocytes and adipocytes. Essential for hematopoietic primitive cell survival and plays an integral role in monocytic development. Its function is as follows. (Microbial infection) The TREX complex is essential for the export of Kaposi's sarcoma-associated herpesvirus (KSHV) intronless mRNAs and infectious virus production. This is THO complex subunit 5 (THOC5) from Homo sapiens (Human).